The primary structure comprises 71 residues: UPF0337 protein PPA1427 (71 aa).

Residues 20–46 form a disordered region; sequence EKIGGLTDDSDLKSAGADQKASGKVAQ.

The protein belongs to the UPF0337 (CsbD) family.

This Cutibacterium acnes (strain DSM 16379 / KPA171202) (Propionibacterium acnes) protein is UPF0337 protein PPA1427.